A 1494-amino-acid chain; its full sequence is Neuropathy target esterase sws (1494 aa).

Topologically, residues 1–35 (MDVLELLRVSGSNMYYSTFLADAWCYYISNQITMT) are lumenal. Residues 36–56 (MYLYCALGVLSMLFIGWFVYF) traverse the membrane as a helical segment. Residues 57–1494 (KRLARLRLRH…NTNNETKNYL (1438 aa)) are Cytoplasmic-facing. 176–303 (IFGHFEKPIF…IRVIQVIMIR (128 aa)) is an a nucleoside 3',5'-cyclic phosphate binding site. Low complexity predominate over residues 362–372 (ASGTAGSTHTA). Disordered stretches follow at residues 362-405 (ASGT…ELSG) and 422-452 (NSYP…QPEV). The segment covering 435-449 (GNLSTRRGSITQQEQ) has biased composition (polar residues). Ser443 bears the Phosphoserine mark. A nucleoside 3',5'-cyclic phosphate is bound by residues 474–601 (ELGL…VVRR) and 590–717 (IVLD…LSHR). The PNPLA domain occupies 944–1110 (LVLGGGGARG…VNNLPGHLWR (167 aa)). A GXGXXG motif is present at residues 948–953 (GGGARG). The GXSXG signature appears at 975–979 (GVSIG). Ser977 serves as the catalytic Nucleophile. Asp1097 (proton acceptor) is an active-site residue. Residues 1097–1099 (DGG) carry the DGA/G motif. The disordered stretch occupies residues 1367-1494 (MDKATQSTPP…NTNNETKNYL (128 aa)). Residues 1370-1381 (ATQSTPPLQSKA) are compositionally biased toward polar residues. 2 stretches are compositionally biased toward basic and acidic residues: residues 1389–1420 (SKEE…RELS) and 1452–1483 (MDKK…KENR). Residues 1484–1494 (SNTNNETKNYL) show a composition bias toward polar residues.

The protein belongs to the NTE family. As to quaternary structure, interacts with Pka-C3; interaction inhibits the catalytic function of Pka-C3 and the esterase activity of sws.

It localises to the endoplasmic reticulum membrane. The catalysed reaction is a 1-acyl-sn-glycero-3-phosphocholine + H2O = sn-glycerol 3-phosphocholine + a fatty acid + H(+). In terms of biological role, phospholipase B that deacylates intracellular phosphatidylcholine (PtdCho), generating glycerophosphocholine (GroPtdCho). This deacylation occurs at both sn-2 and sn-1 positions of PtdCho. Its specific chemical modification by certain organophosphorus (OP) compounds leads to distal axonopathy. Plays a role in the signaling mechanism between neurons and glia that regulates glia wrapping during development of the adult brain. Essential for membrane lipid homeostasis and cell survival in both neurons and glia of the adult brain. The sequence is that of Neuropathy target esterase sws from Drosophila pseudoobscura pseudoobscura (Fruit fly).